The following is a 467-amino-acid chain: Glutamate--tRNA ligase (467 aa).

The 'HIGH' region signature appears at 13-23 (PSPTGYLHVGG). Residues 245–249 (KLSKR) carry the 'KMSKS' region motif. ATP is bound at residue Lys-248.

It belongs to the class-I aminoacyl-tRNA synthetase family. Glutamate--tRNA ligase type 1 subfamily. As to quaternary structure, monomer.

Its subcellular location is the cytoplasm. It carries out the reaction tRNA(Glu) + L-glutamate + ATP = L-glutamyl-tRNA(Glu) + AMP + diphosphate. Its function is as follows. Catalyzes the attachment of glutamate to tRNA(Glu) in a two-step reaction: glutamate is first activated by ATP to form Glu-AMP and then transferred to the acceptor end of tRNA(Glu). The chain is Glutamate--tRNA ligase from Herminiimonas arsenicoxydans.